A 320-amino-acid chain; its full sequence is Stress-induced-phosphoprotein 1 (320 aa).

TPR repeat units lie at residues 5 to 38, 40 to 72, 80 to 113, 140 to 173, 175 to 207, and 208 to 241; these read AIAE…DPSN, TFYN…GRET, AKAM…FRDP, AQEE…DPEN, ILYS…DSKF, and IKGY…DPSN. Residues 241-269 form a disordered region; sequence NEEAREGVRNCLRSNDEDPEKAKERSLAD. Over residues 242-269 the composition is skewed to basic and acidic residues; that stretch reads EEAREGVRNCLRSNDEDPEKAKERSLAD. Residues 269-308 form the STI1 domain; the sequence is DPEVQEILRDPGMRMILEQMSNDPGAVREHLKNPEIFQKL.

As to quaternary structure, forms a complex with hsp-1/hsp70 and daf-21/hsp90. Interacts with daf-21/hsp90 (via the C-terminal MEEVD pentapeptide). Expressed ubiquitously in the whole body. Detected predominantly in the pharyngeal muscles, vulva epithelial cells, striated body-wall muscles, spermathecae and intestinal cell ring. Also observed in the tail regions of hermaphrodite and in the sensory rays and spicules of males.

Its subcellular location is the cytoplasm. In terms of biological role, plays a role in gonad development. Up-regulates longevity and thermotolerance. Binds daf-21/hsp90 and inhibits its ATPase activity. This Caenorhabditis elegans protein is Stress-induced-phosphoprotein 1.